A 216-amino-acid chain; its full sequence is Ras-related protein Rab-5C (216 aa).

GTP-binding residues include Ser-30, Ala-31, Gly-33, Lys-34, Ser-35, Ser-36, His-47, Glu-48, Thr-53, and Gly-79. Ser-35 contributes to the Mg(2+) binding site. 2 short sequence motifs (switch) span residues 45 to 57 (QFHE…IGAA) and 78 to 94 (AGQE…YRGA). Residue Thr-53 coordinates Mg(2+). The residue at position 85 (Ser-85) is a Phosphoserine; by LRRK2. 5 residues coordinate GTP: Asn-134, Lys-135, Asp-137, Ala-165, and Lys-166. Residues 185 to 216 (NEPQNATGAPGRNRGVDLQENNPASRSQCCSN) form a disordered region. A compositionally biased stretch (polar residues) spans 203–216 (QENNPASRSQCCSN). Residues Cys-213 and Cys-214 are each lipidated (S-geranylgeranyl cysteine).

Belongs to the small GTPase superfamily. Rab family. As to quaternary structure, interacts with EEA1. Interacts with INCA1. Interacts with GDI1, GDI2, CHML and CHM; phosphorylation at Ser-85 disrupts this interaction. It depends on Mg(2+) as a cofactor. In terms of processing, phosphorylation of Ser-85 in the switch II region by LRRK2 prevents the association of RAB regulatory proteins, including CHM, CHML and RAB GDP dissociation inhibitors GDI1 and GDI2. Post-translationally, (Microbial infection) Glycosylated on arginine residues by S.typhimurium protein Ssek3.

It localises to the cell membrane. Its subcellular location is the early endosome membrane. The protein localises to the melanosome. The enzyme catalyses GTP + H2O = GDP + phosphate + H(+). Regulated by guanine nucleotide exchange factors (GEFs) which promote the exchange of bound GDP for free GTP. Regulated by GTPase activating proteins (GAPs) which increase the GTP hydrolysis activity. Inhibited by GDP dissociation inhibitors (GDIs). The small GTPases Rab are key regulators of intracellular membrane trafficking, from the formation of transport vesicles to their fusion with membranes. Rabs cycle between an inactive GDP-bound form and an active GTP-bound form that is able to recruit to membranes different sets of downstream effectors directly responsible for vesicle formation, movement, tethering and fusion. This Homo sapiens (Human) protein is Ras-related protein Rab-5C.